The chain runs to 376 residues: Acetylornithine aminotransferase (376 aa).

Residues 96–97 and phenylalanine 128 contribute to the pyridoxal 5'-phosphate site; that span reads GT. A N(2)-acetyl-L-ornithine-binding site is contributed by arginine 131. Position 213-216 (213-216) interacts with pyridoxal 5'-phosphate; it reads DEVQ. The residue at position 242 (lysine 242) is an N6-(pyridoxal phosphate)lysine. Position 270 (serine 270) interacts with N(2)-acetyl-L-ornithine. Threonine 271 contributes to the pyridoxal 5'-phosphate binding site.

It belongs to the class-III pyridoxal-phosphate-dependent aminotransferase family. ArgD subfamily. As to quaternary structure, homodimer. Pyridoxal 5'-phosphate serves as cofactor.

It is found in the cytoplasm. The enzyme catalyses N(2)-acetyl-L-ornithine + 2-oxoglutarate = N-acetyl-L-glutamate 5-semialdehyde + L-glutamate. Its pathway is amino-acid biosynthesis; L-arginine biosynthesis; N(2)-acetyl-L-ornithine from L-glutamate: step 4/4. This Aquifex aeolicus (strain VF5) protein is Acetylornithine aminotransferase.